We begin with the raw amino-acid sequence, 290 residues long: MEGKEDKQQQHKIEDAGILYVTEKEEFKHEKKPGKSIQHSKPCVGRGRVYYAKFINTNVRTCNEPVPYIDVKKEPENQGDWWPHGKGLENPFQPPYDTKSTQRSDFKKPTCPLVSPVKHSKLQKPSYGIVPLVSPDASAELQRNFKEHISFIHQYDARKTPNEPIRGKRHGVFVQTEIKPGSRPTVPERTEVLLNASGSCSSEQSKKTEKGNSAESKMISPGLCRQNSQELLETKTHLSETDIRVAANASLRRPEKREKTAKVFQIAVVNALLTRHDPLSPPIKSQDKSG.

The interval 76 to 112 (ENQGDWWPHGKGLENPFQPPYDTKSTQRSDFKKPTCP) is disordered. Mn stretches follow at residues 128 to 160 (GIVP…ARKT) and 213 to 246 (SAES…IRVA). The segment at 197–228 (SGSCSSEQSKKTEKGNSAESKMISPGLCRQNS) is disordered.

Its subcellular location is the cell projection. It localises to the cilium. The chain is Ciliary microtubule inner protein 6 (CIMIP6) from Bos taurus (Bovine).